Consider the following 335-residue polypeptide: Heat-inducible transcription repressor HrcA (335 aa).

This sequence belongs to the HrcA family.

Its function is as follows. Negative regulator of class I heat shock genes (grpE-dnaK-dnaJ and groELS operons). Prevents heat-shock induction of these operons. This is Heat-inducible transcription repressor HrcA from Mesomycoplasma hyopneumoniae (strain 232) (Mycoplasma hyopneumoniae).